A 460-amino-acid chain; its full sequence is tRNA(Ile)-lysidine synthase (460 aa).

37-42 (SGGADS) contributes to the ATP binding site.

This sequence belongs to the tRNA(Ile)-lysidine synthase family.

It is found in the cytoplasm. It catalyses the reaction cytidine(34) in tRNA(Ile2) + L-lysine + ATP = lysidine(34) in tRNA(Ile2) + AMP + diphosphate + H(+). Its function is as follows. Ligates lysine onto the cytidine present at position 34 of the AUA codon-specific tRNA(Ile) that contains the anticodon CAU, in an ATP-dependent manner. Cytidine is converted to lysidine, thus changing the amino acid specificity of the tRNA from methionine to isoleucine. The sequence is that of tRNA(Ile)-lysidine synthase from Treponema denticola (strain ATCC 35405 / DSM 14222 / CIP 103919 / JCM 8153 / KCTC 15104).